Consider the following 221-residue polypeptide: Thiopurine S-methyltransferase (221 aa).

Residues tryptophan 12, leucine 47, glutamate 68, and arginine 125 each contribute to the S-adenosyl-L-methionine site.

The protein belongs to the class I-like SAM-binding methyltransferase superfamily. TPMT family.

The protein resides in the cytoplasm. It catalyses the reaction S-adenosyl-L-methionine + a thiopurine = S-adenosyl-L-homocysteine + a thiopurine S-methylether.. In Legionella pneumophila subsp. pneumophila (strain Philadelphia 1 / ATCC 33152 / DSM 7513), this protein is Thiopurine S-methyltransferase.